Reading from the N-terminus, the 91-residue chain is uncharacterized protein (91 aa).

This is an uncharacterized protein from Saccharolobus islandicus (Sulfolobus islandicus).